Reading from the N-terminus, the 1788-residue chain is Glutamine and serine-rich protein 1 (1788 aa).

Residues 1–53 (MDAHYAPAGFAEPPAPPASAATQPAAPAWAYEARVPAAASSPSCSGSSPSLKA) show a composition bias toward low complexity. Disordered regions lie at residues 1–69 (MDAH…DVLQ), 472–498 (TRDL…VSQT), and 532–617 (SYSS…SKQD). Polar residues-rich tracts occupy residues 60 to 69 (PSQSESDVLQ), 478 to 492 (VSES…SQGL), 532 to 569 (SYSS…SAQP), and 576 to 594 (VQSS…SSIP). Phosphoserine is present on residues Ser670 and Ser940. Thr1003 is modified (phosphothreonine). Ser1041 is modified (phosphoserine). Disordered stretches follow at residues 1104–1163 (QPGD…TDVY) and 1234–1264 (IQTT…VSLS). Lys1112 participates in a covalent cross-link: Glycyl lysine isopeptide (Lys-Gly) (interchain with G-Cter in SUMO2). The span at 1126–1136 (PKEKAKGKEQG) shows a compositional bias: basic and acidic residues. Residue Lys1137 forms a Glycyl lysine isopeptide (Lys-Gly) (interchain with G-Cter in SUMO2) linkage. Residues Ser1262, Ser1281, and Ser1282 each carry the phosphoserine modification. Thr1394 bears the Phosphothreonine mark. Ser1401 bears the Phosphoserine mark. Positions 1494–1588 (VCSKKPRNKP…DEGFEPPAPS (95 aa)) are disordered. Over residues 1510–1537 (IPSKPSSISKTSDPPVSKTTTTKTPSTK) the composition is skewed to low complexity. Residues 1545-1561 (IKAEPPPKKRKKWKEEF) show a composition bias toward basic and acidic residues. A compositionally biased stretch (low complexity) spans 1562-1575 (SSSQSESSPEVRSS).

As to quaternary structure, interacts with TET1.

The protein resides in the chromosome. In terms of biological role, plays an essential role in the protection and maintenance of transcriptional and developmental programs. Protects many bivalent promoters and poised enhancers from hypermethylation, showing a marked preference for these regulatory elements over other types of promoters or enhancers. Mechanistically, cooperates with TET1 and binds to DNA in a common complex to inhibit the binding of DNMT3A/3B and therefore de novo methylation. This chain is Glutamine and serine-rich protein 1, found in Mus musculus (Mouse).